We begin with the raw amino-acid sequence, 276 residues long: Putative E3 ubiquitin-protein ligase SINA-like 9 (276 aa).

Residues 38–74 (CPICCEALTSPIFQCDNGHLACGSCCPKLSNKCPACT) form an RING-type zinc finger. The tract at residues 88-274 (VLESILIPCP…MQVFIIENVD (187 aa)) is SBD. The SIAH-type zinc-finger motif lies at 91 to 149 (SILIPCPNVRFGCTKSFFYGKESAHEKECIFSQCSCPSSVCDYTGSYKDLYAHYKLTHS). Residues C96, C103, H115, C119, C126, C131, H143, and H148 each contribute to the Zn(2+) site.

Belongs to the SINA (Seven in absentia) family.

The catalysed reaction is S-ubiquitinyl-[E2 ubiquitin-conjugating enzyme]-L-cysteine + [acceptor protein]-L-lysine = [E2 ubiquitin-conjugating enzyme]-L-cysteine + N(6)-ubiquitinyl-[acceptor protein]-L-lysine.. The protein operates within protein modification; protein ubiquitination. E3 ubiquitin-protein ligase that mediates ubiquitination and subsequent proteasomal degradation of target proteins. E3 ubiquitin ligases accept ubiquitin from an E2 ubiquitin-conjugating enzyme in the form of a thioester and then directly transfers the ubiquitin to targeted substrates. It probably triggers the ubiquitin-mediated degradation of different substrates. In Arabidopsis thaliana (Mouse-ear cress), this protein is Putative E3 ubiquitin-protein ligase SINA-like 9.